We begin with the raw amino-acid sequence, 133 residues long: Homeobox protein BarH-like 2 (133 aa).

Residues 1–46 (ELEKEFQKQKYLSTPDRLDLAQSLGLTQLQVKTWYQNRRMKWKKMV) constitute a DNA-binding region (homeobox). The interval 45 to 133 (MVLKGGQEAP…VTSPEPPPSS (89 aa)) is disordered.

It belongs to the BAR homeobox family. As to expression, expressed in keratinizing epithelia such as wool follicle, tongue and esophagus. Expressed at low level in thymus. Not detected in spleen, skeletal muscle, brain, heart kidney, liver and lung.

The protein localises to the nucleus. Functionally, transcription factor. Binds optimally to the DNA consensus sequence 5'-YYTAATGRTTTTY-3'. May control the expression of neural adhesion molecules such as L1 or Ng-CAM during embryonic development of both the central and peripherical nervous system. May be involved in controlling adhesive processes in keratinizing epithelia. The polypeptide is Homeobox protein BarH-like 2 (BARX2) (Ovis aries (Sheep)).